The sequence spans 132 residues: Large ribosomal subunit protein uL14 (132 aa).

Belongs to the universal ribosomal protein uL14 family. As to quaternary structure, part of the 50S ribosomal subunit. Forms a cluster with proteins L3 and L24e, part of which may contact the 16S rRNA in 2 intersubunit bridges.

Binds to 23S rRNA. Forms part of two intersubunit bridges in the 70S ribosome. The protein is Large ribosomal subunit protein uL14 of Methanococcus maripaludis (strain C5 / ATCC BAA-1333).